We begin with the raw amino-acid sequence, 309 residues long: General transcription factor IIH subunit 3 (309 aa).

A C4-type zinc finger spans residues 269–286 (CSVCLSIFCNFSPICTTC).

This sequence belongs to the TFB4 family. In terms of assembly, part of a TFIID-containing RNA polymerase II pre-initiation complex that is composed of TBP and at least GTF2A1, GTF2A2, GTF2E1, GTF2E2, GTF2F1, GTF2H2, GTF2H3, GTF2H4, GTF2H5, GTF2B, TCEA1, ERCC2, ERCC3, TAF1, TAF2, TAF3, TAF4, TAF5, TAF6, TAF7, TAF8, TAF9, TAF10, TAF11, TAF12 and TAF13. Component of the 7-subunit TFIIH core complex composed of XPB/ERCC3, XPD/ERCC2, GTF2H1, GTF2H2, GTF2H3, GTF2H4 and GTF2H5, which is active in NER. The core complex associates with the 3-subunit CDK-activating kinase (CAK) module composed of CCNH/cyclin H, CDK7 and MNAT1 to form the 10-subunit holoenzyme (holo-TFIIH) active in transcription. Interacts with RARA; the interaction requires prior phosphorylation of RARA on 'Ser-369' which then enhances interaction of RARA with CDK7.

It localises to the nucleus. Component of the general transcription and DNA repair factor IIH (TFIIH) core complex, which is involved in general and transcription-coupled nucleotide excision repair (NER) of damaged DNA and, when complexed to CAK, in RNA transcription by RNA polymerase II. In NER, TFIIH acts by opening DNA around the lesion to allow the excision of the damaged oligonucleotide and its replacement by a new DNA fragment. In transcription, TFIIH has an essential role in transcription initiation. When the pre-initiation complex (PIC) has been established, TFIIH is required for promoter opening and promoter escape. Phosphorylation of the C-terminal tail (CTD) of the largest subunit of RNA polymerase II by the kinase module CAK controls the initiation of transcription. This is General transcription factor IIH subunit 3 (GTF2H3) from Bos taurus (Bovine).